The following is a 431-amino-acid chain: Adenylosuccinate lyase (431 aa).

N(6)-(1,2-dicarboxyethyl)-AMP-binding positions include 4-5, 67-69, and 93-94; these read RY, RHD, and TS. His-141 acts as the Proton donor/acceptor in catalysis. Gln-212 serves as a coordination point for N(6)-(1,2-dicarboxyethyl)-AMP. Ser-262 (proton donor/acceptor) is an active-site residue. Residues Ser-263, 268–270, Asn-276, and 307–311 contribute to the N(6)-(1,2-dicarboxyethyl)-AMP site; these read KRN and SAERI.

The protein belongs to the lyase 1 family. Adenylosuccinate lyase subfamily. Homotetramer. Residues from neighboring subunits contribute catalytic and substrate-binding residues to each active site.

The catalysed reaction is N(6)-(1,2-dicarboxyethyl)-AMP = fumarate + AMP. It carries out the reaction (2S)-2-[5-amino-1-(5-phospho-beta-D-ribosyl)imidazole-4-carboxamido]succinate = 5-amino-1-(5-phospho-beta-D-ribosyl)imidazole-4-carboxamide + fumarate. It participates in purine metabolism; AMP biosynthesis via de novo pathway; AMP from IMP: step 2/2. It functions in the pathway purine metabolism; IMP biosynthesis via de novo pathway; 5-amino-1-(5-phospho-D-ribosyl)imidazole-4-carboxamide from 5-amino-1-(5-phospho-D-ribosyl)imidazole-4-carboxylate: step 2/2. In terms of biological role, catalyzes two reactions in de novo purine nucleotide biosynthesis. Catalyzes the breakdown of 5-aminoimidazole- (N-succinylocarboxamide) ribotide (SAICAR or 2-[5-amino-1-(5-phospho-beta-D-ribosyl)imidazole-4-carboxamido]succinate) to 5-aminoimidazole-4-carboxamide ribotide (AICAR or 5-amino-1-(5-phospho-beta-D-ribosyl)imidazole-4-carboxamide) and fumarate, and of adenylosuccinate (ADS or N(6)-(1,2-dicarboxyethyl)-AMP) to adenosine monophosphate (AMP) and fumarate. Influences the affinity of glutamyl--tRNA ligase for its substrates and increases its thermostability. This chain is Adenylosuccinate lyase (purB), found in Bacillus subtilis (strain 168).